We begin with the raw amino-acid sequence, 643 residues long: 1-deoxy-D-xylulose-5-phosphate synthase (643 aa).

Thiamine diphosphate is bound by residues H89 and 130–132 (GHS). Mg(2+) is bound at residue D161. Thiamine diphosphate contacts are provided by residues 162-163 (GA), N190, F297, and E380. Residue N190 coordinates Mg(2+).

It belongs to the transketolase family. DXPS subfamily. As to quaternary structure, homodimer. It depends on Mg(2+) as a cofactor. Thiamine diphosphate serves as cofactor.

The enzyme catalyses D-glyceraldehyde 3-phosphate + pyruvate + H(+) = 1-deoxy-D-xylulose 5-phosphate + CO2. Its pathway is metabolic intermediate biosynthesis; 1-deoxy-D-xylulose 5-phosphate biosynthesis; 1-deoxy-D-xylulose 5-phosphate from D-glyceraldehyde 3-phosphate and pyruvate: step 1/1. In terms of biological role, catalyzes the acyloin condensation reaction between C atoms 2 and 3 of pyruvate and glyceraldehyde 3-phosphate to yield 1-deoxy-D-xylulose-5-phosphate (DXP). In Hahella chejuensis (strain KCTC 2396), this protein is 1-deoxy-D-xylulose-5-phosphate synthase.